The sequence spans 227 residues: Cytidylate kinase (227 aa).

ATP is bound at residue 12 to 20 (GPSGAGKGT).

This sequence belongs to the cytidylate kinase family. Type 1 subfamily.

It is found in the cytoplasm. The catalysed reaction is CMP + ATP = CDP + ADP. It catalyses the reaction dCMP + ATP = dCDP + ADP. This Shigella boydii serotype 4 (strain Sb227) protein is Cytidylate kinase.